We begin with the raw amino-acid sequence, 748 residues long: Chondroadherin-like protein (748 aa).

An N-terminal signal peptide occupies residues 1–29 (MERPQSSIWVFMLLLFMVLLQSPAWHVAA). An LRRNT 1 domain is found at 30–61 (QRCPQTCVCDNSRRHVTCRHQNLTEVPNTIPE). Asn-51 carries an N-linked (GlcNAc...) asparagine glycan. 9 LRR repeats span residues 85–107 (PHLTHLDLRNCQVEMVAEGAFRG), 108–131 (LGRLLLLNLASNRLSTLPQEALDG), 132–155 (LGSLRRLELEGNMLEELRPGTFGA), 156–179 (LGSLTTLNLAHNALVYLPAMAFQG), 181–203 (LRTRWLQLSHNALSVLAPEALAG), 204–227 (LPALRRLSLHHNELQALPGAALSQ), 229–252 (RSLARLELGHNPLTYTGEEDGLAL), 253–275 (PGLRELALDHGSLQALGPRAFAH), and 276–299 (CPRLHTLDLRGNQLTTLPPLQVPG). An LRRCT 1 domain is found at 309-357 (NPLWCACHARPLLEWLVRARVRSDGACRGPRRLRGEALDTLRPSDLRCP). The tract at residues 352 to 389 (SDLRCPGDAAAGDGDGDEDEDRPAGPRAPPLRSPHGEA) is disordered. One can recognise an LRRNT 2 domain in the interval 394-428 (PCPPACACVAETRHSTCDGRGLQAVPRGFPNDTQL). The cysteines at positions 395 and 410 are disulfide-linked. 10 LRR repeats span residues 423-446 (PNDTQLLDLRRNHFPSVPRAAFPG), 448-470 (RHLVSLHLQHCGVAELEPGALAG), 471-494 (LDRLLYLYLSHNQLSGLSAAALEG), 496-518 (PNLGYLYLEHNRFLRIPGTALRA), 519-542 (LPTLVSLHLQDNAVDRLAPGDLAG), 544-566 (RALRCLYLSGNHITQVSPGALGP), 567-590 (ARELEKLHLDRNRLREVPTGALEG), 591-614 (LPALKELQLSGNPLRALPDGAFQP), 616-639 (GRSLQQLFLNSSDLEQISPRAFSG), and 641-665 (GKGLRSLYLHKNQLQSLPAPLGLSG). The N-linked (GlcNAc...) asparagine glycan is linked to Asn-625. Residues 674-722 (NPFHCDCQLLPLHRWLTGLNLRVGATCATPPSVRGQKVKVAAPVFEACP) form the LRRCT 2 domain. Disulfide bonds link Cys-678-Cys-721 and Cys-680-Cys-700. The tract at residues 728 to 748 (KAKRTPTSRGSARRTPSLSRH) is disordered. Polar residues predominate over residues 734-748 (TSRGSARRTPSLSRH).

Belongs to the small leucine-rich proteoglycan (SLRP) family. SLRP class IV subfamily. Associates with collagen and binds to collagen fibrils. As to expression, expressed in cartilage, including articular knee cartilage, where it localizes to the extracellular space in the area immediately surrounding the chondrocytes, not detected in any other tissues (at protein level).

It localises to the secreted. The protein resides in the extracellular space. It is found in the extracellular matrix. In terms of biological role, potential negative modulator of chondrocyte differentiation. Inhibits collagen fibrillogenesis in vitro. May influence chondrocyte's differentiation by acting on its cellular collagenous microenvironment. In Mus musculus (Mouse), this protein is Chondroadherin-like protein (Chadl).